A 105-amino-acid chain; its full sequence is Large ribosomal subunit protein eL30 (105 aa).

It belongs to the eukaryotic ribosomal protein eL30 family.

The sequence is that of Large ribosomal subunit protein eL30 (RPL30) from Trypanosoma brucei brucei.